Reading from the N-terminus, the 459-residue chain is MNGKIVQIIGPVIDVEFKGADLPKIYDALKVDELDLTLEVQQQVGDNVVRAIAMGSSDGLKRGMAVSNTGEAISVPVGKPTLGRIFDVLGNPIDNAGPVESEEKMTIHRPAPAFDELAASQELLETGVKVIDLICPFAKGGKVGLFGGAGVGKTVNMMELIRNIAIEHSGYSVFAGVGERTREGNDFYYEMEESGVLDKVALVYGQMNEPPGNRLRVALTGLTMAEYFRDEGRDILFFVDNIYRYTLAGTEVSALLGRMPSAVGYQPTLSQEMGQIQERITSTKTGSITSIQAVYVPADDLTDPAPATTFAHLDATVVLNRSIAETGIYPAIDPLDSTSRQLDPLVVGSEHYDTARGVQETLQRYKELKDIIAILGMDELSEEDRSLVARARKMQRFFSQPYFVAKVFTGEDGRYVPLKETLRGFKMIISGELDDIPEQAFMYAGDIDEVLEKAKKYKD.

Residue 147–154 (GGAGVGKT) coordinates ATP.

It belongs to the ATPase alpha/beta chains family. As to quaternary structure, F-type ATPases have 2 components, CF(1) - the catalytic core - and CF(0) - the membrane proton channel. CF(1) has five subunits: alpha(3), beta(3), gamma(1), delta(1), epsilon(1). CF(0) has three main subunits: a(1), b(2) and c(9-12). The alpha and beta chains form an alternating ring which encloses part of the gamma chain. CF(1) is attached to CF(0) by a central stalk formed by the gamma and epsilon chains, while a peripheral stalk is formed by the delta and b chains.

It localises to the cell inner membrane. It carries out the reaction ATP + H2O + 4 H(+)(in) = ADP + phosphate + 5 H(+)(out). In terms of biological role, produces ATP from ADP in the presence of a proton gradient across the membrane. The catalytic sites are hosted primarily by the beta subunits. The protein is ATP synthase subunit beta of Hydrogenovibrio crunogenus (strain DSM 25203 / XCL-2) (Thiomicrospira crunogena).